Consider the following 623-residue polypeptide: Glutathione import ATP-binding protein GsiA (623 aa).

ABC transporter domains are found at residues Val-15–Leu-269 and Leu-314–Leu-564. Residues Gly-49–Ser-56 and Gly-357–Ser-364 each bind ATP.

The protein belongs to the ABC transporter superfamily. Glutathione importer (TC 3.A.1.5.11) family. As to quaternary structure, the complex is composed of two ATP-binding proteins (GsiA), two transmembrane proteins (GsiC and GsiD) and a solute-binding protein (GsiB).

The protein resides in the cell inner membrane. The catalysed reaction is glutathione(out) + ATP + H2O = glutathione(in) + ADP + phosphate + H(+). Functionally, part of the ABC transporter complex GsiABCD involved in glutathione import. Responsible for energy coupling to the transport system. The chain is Glutathione import ATP-binding protein GsiA from Escherichia coli O1:K1 / APEC.